Reading from the N-terminus, the 323-residue chain is DNA-directed RNA polymerase subunit alpha 1 (323 aa).

An alpha N-terminal domain (alpha-NTD) region spans residues 1 to 228 (MSNNNSKQEF…EQISVFVSLR (228 aa)). The interval 244–323 (IDPILLKPID…DNFRELVEGK (80 aa)) is alpha C-terminal domain (alpha-CTD).

Belongs to the RNA polymerase alpha chain family. In terms of assembly, homodimer. The RNAP catalytic core consists of 2 alpha, 1 beta, 1 beta' and 1 omega subunit. When a sigma factor is associated with the core the holoenzyme is formed, which can initiate transcription.

The enzyme catalyses RNA(n) + a ribonucleoside 5'-triphosphate = RNA(n+1) + diphosphate. DNA-dependent RNA polymerase catalyzes the transcription of DNA into RNA using the four ribonucleoside triphosphates as substrates. The sequence is that of DNA-directed RNA polymerase subunit alpha 1 from Francisella tularensis subsp. novicida (strain U112).